The chain runs to 129 residues: M-zodatoxin-Lt8e (129 aa).

The first 20 residues, 1–20 (MKYFVVALALVAAFVCIAES), serve as a signal peptide directing secretion. Positions 21 to 60 (KPAESEHELAEVEEENELADLEDAVWLEHLADLSDLEEAR) are excised as a propeptide. The short motif at 57–60 (EEAR) is the Processing quadruplet motif element.

Cleavage of the propeptide depends on the processing quadruplet motif (XXXR, with at least one of X being E). Expressed by the venom gland.

The protein resides in the secreted. Insecticidal, cytolytic and antimicrobial peptide. Forms voltage-dependent, ion-permeable channels in membranes. At high concentration causes cell membrane lysis. This Lachesana tarabaevi (Spider) protein is M-zodatoxin-Lt8e (cit 1-5).